Reading from the N-terminus, the 1558-residue chain is ABC transporter NFT1 (1558 aa).

Residues 1–29 (MIKNGTCPYWERDDLSECARREYIEFKFP) lie on the Extracellular side of the membrane. A glycan (N-linked (GlcNAc...) asparagine) is linked at N4. A helical transmembrane segment spans residues 30-50 (LFILLTGMIYAFCKVFRAFYL). Residues 51-103 (RGKNHTNEAPEFEEQGNGNHEYARFSVLRLKSAWESRSFCNVNNRSTFDKFKK) are Cytoplasmic-facing. Residues 104–124 (FIEGAFIVLQLTIHLYILSSM) traverse the membrane as a helical segment. The Extracellular segment spans residues 125 to 130 (PMDNKK). Residues 131–151 (FFHQGFLVQMFLWILLLVVIT) traverse the membrane as a helical segment. Residues 152–169 (LRLISASQSFRWVLACKR) are Cytoplasmic-facing. A helical transmembrane segment spans residues 170 to 190 (DLWAVSFYSYASLFTLSILPL). Over 191-201 (RSVFIGKIKDK) the chain is Extracellular. The helical transmembrane segment at 202-222 (IMVKYIISETFIDLALLLLLS) threads the bilayer. The Cytoplasmic portion of the chain corresponds to 223–302 (TSSIEGTRYS…SSKKGRLLPN (80 aa)). Residues 303–323 (IICYFKAVFISQLFLAFVSSF) form a helical membrane-spanning segment. One can recognise an ABC transmembrane type-1 1 domain in the interval 311–621 (FISQLFLAFV…IASTVSLLIQ (311 aa)). The Extracellular segment spans residues 324–351 (LNFVPSLLMPRILSYVNDPKSKSWNLVS). The chain crosses the membrane as a helical span at residues 352 to 374 (LYVSSMLVSKIIATTCRGQGLFL). The Cytoplasmic portion of the chain corresponds to 375 to 449 (GEKGTMQLRT…VMSIDAFKVS (75 aa)). Residues 410–434 (NASTSFEENPDSSEAEPRKKSSRKD) form a disordered region. A compositionally biased stretch (basic and acidic residues) spans 424–434 (AEPRKKSSRKD). Residues 450-470 (EAMNTFYLACEAVFMTVTALM) form a helical membrane-spanning segment. The Extracellular segment spans residues 471–481 (ILYSLLGWSAF). Residues 482-504 (AGTFALLAMIPLNFWCATFYGNY) traverse the membrane as a helical segment. The Cytoplasmic segment spans residues 505 to 558 (QADQLILTDKRTSGISEALNSIRVIKLLAWENLFYQKIINVRDGEIRLLKKKAT). The helical transmembrane segment at 559 to 579 (IFFLNHLIWFFGPTLVSAITF) threads the bilayer. Over 580 to 584 (SVFIK) the chain is Extracellular. A helical transmembrane segment spans residues 585 to 605 (FQNQTLTPTIAFTALSLFAIL). The Cytoplasmic segment spans residues 606–953 (RTPMDQIAST…KFSAYKWLAD (348 aa)). One can recognise an ABC transporter 1 domain in the interval 651-892 (FGFEDASMEW…NEFLRESINN (242 aa)). 686 to 693 (GPTGSGKS) is an ATP binding site. The span at 892–901 (NDSKNTTHNQ) shows a compositional bias: polar residues. A disordered region spans residues 892–926 (NDSKNTTHNQIDLKRSTTSKKTKNGDPEGGNSQDE). A helical transmembrane segment spans residues 954 to 974 (YFGGLGVVFVFTSSSILIHGI). Positions 961 to 1251 (VFVFTSSSIL…IIKVFSSVEL (291 aa)) constitute an ABC transmembrane type-1 2 domain. Residues 975–1013 (TLSQGFWLRYWLDTGSSGSKSTWLYRIVEGHSNIYFLLT) lie on the Extracellular side of the membrane. A helical membrane pass occupies residues 1014-1034 (YIIIGLVSSFLTSGKVWIAII). Topologically, residues 1035–1082 (SGTNVTKKIFAKLLSSILYAKLRFHNVTPTGRIMNRFSKDMDIIDQQL) are cytoplasmic. The chain crosses the membrane as a helical span at residues 1083–1105 (IPNFEGLSYSVVVCLWIILLIGY). The Extracellular portion of the chain corresponds to 1106–1109 (VTPQ). The chain crosses the membrane as a helical span at residues 1110–1132 (FLLFAIPLCALYYTVCTLYLRAS). Over 1133–1199 (RELKRIDNIN…ATEWITYRVD (67 aa)) the chain is Cytoplasmic. A helical membrane pass occupies residues 1200 to 1220 (IIGTLVLFSSSVMIIMKASYL). Over 1221–1222 (DA) the chain is Extracellular. A helical membrane pass occupies residues 1223-1243 (GLAGILLSNAFSFTETAQWII). At 1244-1558 (KVFSSVELLM…LAKVSFDNKR (315 aa)) the chain is on the cytoplasmic side. Residues 1285 to 1538 (VELKNLSLRY…RNTIFYRLCR (254 aa)) enclose the ABC transporter 2 domain. 1319–1326 (GRTGAGKS) contacts ATP.

This sequence belongs to the ABC transporter superfamily. ABCC family. Conjugate transporter (TC 3.A.1.208) subfamily.

Its subcellular location is the membrane. The chain is ABC transporter NFT1 (NFT1) from Saccharomyces cerevisiae (Baker's yeast).